A 50-amino-acid chain; its full sequence is Sperm protamine P1 (50 aa).

The protein belongs to the protamine P1 family. Cross-linked by interchain disulfide bonds around the DNA-helix. As to expression, testis.

It localises to the nucleus. The protein localises to the chromosome. Protamines substitute for histones in the chromatin of sperm during the haploid phase of spermatogenesis. They compact sperm DNA into a highly condensed, stable and inactive complex. The chain is Sperm protamine P1 (PRM1) from Saguinus imperator (Emperor tamarin).